A 455-amino-acid chain; its full sequence is Outer capsid protein sigma-1 (455 aa).

Residues 1–307 are tail; it reads MDPRLREEVV…YPIADVSGGI (307 aa). A coiled-coil region spans residues 116-148; the sequence is LAELRVDHDNLVARVDTAERNIGSLTTELSTLT. N-linked (GlcNAc...) asparagine; by host glycans are attached at residues Asn231, Asn264, and Asn282. A head region spans residues 308-455; it reads GMSPNYRFRQ…MTVSYPRSFT (148 aa).

The protein belongs to the orthoreovirus sigma-1 protein family. In terms of assembly, homotrimer. Interacts (via the head region) with human F11R. Post-translationally, undergoes dramatic conformational rearrangements during viral disassembly in the endocytic pathway.

It localises to the virion. Functionally, fiber-like molecule that attaches the virion to the host cell membrane by binding to the primary receptor F11R/JAM-A and to sialic acid containing proteins (coreceptor). The interaction of sigma-1 with F11R is required for NF-kB activation and apoptosis. Binding to both sialic acid and F11R is required to induce maximal levels of apoptosis. This Reovirus type 3 (strain Dearing) (T3D) protein is Outer capsid protein sigma-1 (S1).